The sequence spans 47 residues: Large ribosomal subunit protein bL34 (47 aa).

Belongs to the bacterial ribosomal protein bL34 family.

This chain is Large ribosomal subunit protein bL34, found in Corynebacterium jeikeium (strain K411).